A 460-amino-acid chain; its full sequence is Keratin, type I cytoskeletal 27 (460 aa).

Positions 1–83 (MSVRFSSASR…GNEHGLLSGN (83 aa)) are head. Residues 84–119 (EKVTMQNLNDRLASYLDNVRALEEANADLEQKIKGW) are coil 1A. The region spanning 84–399 (EKVTMQNLND…RLIDGEDGSC (316 aa)) is the IF rod domain. Residues 120-141 (YEKFGPGSCRGLDHDYSRYFTV) form a linker 1 region. Residues 142-233 (IDDLRNQIIS…KNHEEEMKAL (92 aa)) are coil 1B. The interval 234–256 (QCAAGGNVNVEMNAAPGVDLTVL) is linker 12. Residues 257-395 (LNNMRAEYEA…ETYCRLIDGE (139 aa)) are coil 2. The tract at residues 396 to 460 (DGSCAKSKGY…NVKSEQRVPS (65 aa)) is tail. A disordered region spans residues 435–460 (LSSRVHSVEEKSTKVNNVKSEQRVPS). Polar residues predominate over residues 448–460 (KVNNVKSEQRVPS).

This sequence belongs to the intermediate filament family. In terms of assembly, heterotetramer of two type I and two type II keratins. Interacts with KRT6A to form filaments.

The protein resides in the cytoplasm. Functionally, essential for the proper assembly of type I and type II keratin protein complexes and formation of keratin intermediate filaments in the inner root sheath (irs). In Bos taurus (Bovine), this protein is Keratin, type I cytoskeletal 27.